The primary structure comprises 113 residues: Ig heavy chain V-III region T957 (113 aa).

The 113-residue stretch at 1–113 (EVKLEESGGG…YWGQGTLVTV (113 aa)) folds into the Ig-like domain. A disulfide bridge connects residues C22 and C98.

In Mus musculus (Mouse), this protein is Ig heavy chain V-III region T957.